We begin with the raw amino-acid sequence, 465 residues long: Argininosuccinate lyase (465 aa).

This sequence belongs to the lyase 1 family. Argininosuccinate lyase subfamily.

It is found in the cytoplasm. The enzyme catalyses 2-(N(omega)-L-arginino)succinate = fumarate + L-arginine. The protein operates within amino-acid biosynthesis; L-arginine biosynthesis; L-arginine from L-ornithine and carbamoyl phosphate: step 3/3. This is Argininosuccinate lyase from Hyphomonas neptunium (strain ATCC 15444).